A 334-amino-acid chain; its full sequence is Glyceraldehyde-3-phosphate dehydrogenase 1 (334 aa).

Residues 12 to 13 (RI), D35, and R79 contribute to the NAD(+) site. D-glyceraldehyde 3-phosphate is bound by residues 152-154 (SCT), T183, R198, 211-212 (SG), and R234. The Nucleophile role is filled by C153. N315 is a binding site for NAD(+).

It belongs to the glyceraldehyde-3-phosphate dehydrogenase family. As to quaternary structure, homotetramer.

Its subcellular location is the cytoplasm. It carries out the reaction D-glyceraldehyde 3-phosphate + phosphate + NAD(+) = (2R)-3-phospho-glyceroyl phosphate + NADH + H(+). It participates in carbohydrate degradation; glycolysis; pyruvate from D-glyceraldehyde 3-phosphate: step 1/5. Its activity is regulated as follows. Resistant to pentalenolactone. In terms of biological role, catalyzes the oxidative phosphorylation of glyceraldehyde 3-phosphate (G3P) to 1,3-bisphosphoglycerate (BPG) using the cofactor NAD. The first reaction step involves the formation of a hemiacetal intermediate between G3P and a cysteine residue, and this hemiacetal intermediate is then oxidized to a thioester, with concomitant reduction of NAD to NADH. The reduced NADH is then exchanged with the second NAD, and the thioester is attacked by a nucleophilic inorganic phosphate to produce BPG. This Streptomyces avermitilis (strain ATCC 31267 / DSM 46492 / JCM 5070 / NBRC 14893 / NCIMB 12804 / NRRL 8165 / MA-4680) protein is Glyceraldehyde-3-phosphate dehydrogenase 1 (gap1).